Here is a 148-residue protein sequence, read N- to C-terminus: Nucleoside diphosphate kinase A (148 aa).

Residues Lys-9, Phe-57, Arg-85, Thr-91, Arg-102, and Asn-112 each contribute to the ATP site. The active-site Pros-phosphohistidine intermediate is the His-115.

It belongs to the NDK family. Requires Mg(2+) as cofactor.

The enzyme catalyses a 2'-deoxyribonucleoside 5'-diphosphate + ATP = a 2'-deoxyribonucleoside 5'-triphosphate + ADP. It catalyses the reaction a ribonucleoside 5'-diphosphate + ATP = a ribonucleoside 5'-triphosphate + ADP. In terms of biological role, major role in the synthesis of nucleoside triphosphates other than ATP. The ATP gamma phosphate is transferred to the NDP beta phosphate via a ping-pong mechanism, using a phosphorylated active-site intermediate. The sequence is that of Nucleoside diphosphate kinase A from Flaveria bidentis (Coastal plain yellowtops).